The chain runs to 250 residues: Aquaporin TIP2-3 (250 aa).

An N-acetylmethionine modification is found at Met-1. At 1–24 (MVKIEVGSVGDSFSVSSLKAYLSE) the chain is on the cytoplasmic side. An N6,N6-dimethyllysine modification is found at Lys-3. A helical membrane pass occupies residues 25–45 (FIATLLFVFAGVGSAVAFAKL). At 46 to 54 (TSDGALDPA) the chain is on the vacuolar side. Residues 55–75 (GLVAIAIAHAFALFVGVSIAA) traverse the membrane as a helical segment. At 76–101 (NISGGHLNPAVTLGLAIGGNITLITG) the chain is on the cytoplasmic side. The NPA 1 motif lies at 83-85 (NPA). Residues 102–122 (FFYWIAQCLGSIVACLLLVFV) form a helical membrane-spanning segment. Residues 123–134 (TNGKSVPTHGVS) lie on the Vacuolar side of the membrane. The helical transmembrane segment at 135–155 (AGLGAVEGVVMEIVVTFALVY) threads the bilayer. The Cytoplasmic segment spans residues 156–168 (TVYATAADPKKGS). A helical transmembrane segment spans residues 169 to 189 (LGTIAPIAIGFIVGANILAAG). At 190 to 217 (PFSGGSMNPARSFGPAVVSGDLSQIWIY) the chain is on the vacuolar side. An NPA 2 motif is present at residues 197–199 (NPA). A helical membrane pass occupies residues 218 to 238 (WVGPLVGGALAGLIYGDVFIG). Topologically, residues 239–250 (SYEAVETREIRV) are cytoplasmic.

The protein belongs to the MIP/aquaporin (TC 1.A.8) family. TIP (TC 1.A.8.10) subfamily. Interacts with cucumber mosaic virus (CMV) Protein 1a. In terms of tissue distribution, widely expressed.

The protein localises to the vacuole membrane. In terms of biological role, transports methylammonium or ammonium in yeast cells, preferentially at high medium pH. May participate in vacuolar compartmentation and detoxification of ammonium. This chain is Aquaporin TIP2-3 (TIP2-3), found in Arabidopsis thaliana (Mouse-ear cress).